The chain runs to 311 residues: Glycine--tRNA ligase alpha subunit (311 aa).

Belongs to the class-II aminoacyl-tRNA synthetase family. As to quaternary structure, tetramer of two alpha and two beta subunits.

Its subcellular location is the cytoplasm. It carries out the reaction tRNA(Gly) + glycine + ATP = glycyl-tRNA(Gly) + AMP + diphosphate. The polypeptide is Glycine--tRNA ligase alpha subunit (Brucella anthropi (strain ATCC 49188 / DSM 6882 / CCUG 24695 / JCM 21032 / LMG 3331 / NBRC 15819 / NCTC 12168 / Alc 37) (Ochrobactrum anthropi)).